A 275-amino-acid chain; its full sequence is 2-dehydro-3-deoxyphosphooctonate aldolase (275 aa).

It belongs to the KdsA family.

It is found in the cytoplasm. The catalysed reaction is D-arabinose 5-phosphate + phosphoenolpyruvate + H2O = 3-deoxy-alpha-D-manno-2-octulosonate-8-phosphate + phosphate. The protein operates within carbohydrate biosynthesis; 3-deoxy-D-manno-octulosonate biosynthesis; 3-deoxy-D-manno-octulosonate from D-ribulose 5-phosphate: step 2/3. It participates in bacterial outer membrane biogenesis; lipopolysaccharide biosynthesis. This Protochlamydia amoebophila (strain UWE25) protein is 2-dehydro-3-deoxyphosphooctonate aldolase.